The primary structure comprises 140 residues: Nucleoside diphosphate kinase (140 aa).

6 residues coordinate ATP: lysine 11, phenylalanine 59, arginine 87, threonine 93, arginine 104, and asparagine 114. Histidine 117 functions as the Pros-phosphohistidine intermediate in the catalytic mechanism.

Belongs to the NDK family. In terms of assembly, homotetramer. The cofactor is Mg(2+).

The protein localises to the cytoplasm. It catalyses the reaction a 2'-deoxyribonucleoside 5'-diphosphate + ATP = a 2'-deoxyribonucleoside 5'-triphosphate + ADP. The enzyme catalyses a ribonucleoside 5'-diphosphate + ATP = a ribonucleoside 5'-triphosphate + ADP. In terms of biological role, major role in the synthesis of nucleoside triphosphates other than ATP. The ATP gamma phosphate is transferred to the NDP beta phosphate via a ping-pong mechanism, using a phosphorylated active-site intermediate. This Hyphomonas neptunium (strain ATCC 15444) protein is Nucleoside diphosphate kinase.